The primary structure comprises 410 residues: Multifunctional CCA protein (410 aa).

Positions 8 and 11 each coordinate ATP. Positions 8 and 11 each coordinate CTP. Residues D21 and D23 each contribute to the Mg(2+) site. The ATP site is built by R91, R137, and R140. Residues R91, R137, and R140 each coordinate CTP. The region spanning 225–326 (SGIHTLMTLQ…LNVLKKTDAF (102 aa)) is the HD domain.

The protein belongs to the tRNA nucleotidyltransferase/poly(A) polymerase family. Bacterial CCA-adding enzyme type 1 subfamily. Monomer. Can also form homodimers and oligomers. Mg(2+) is required as a cofactor. It depends on Ni(2+) as a cofactor.

It carries out the reaction a tRNA precursor + 2 CTP + ATP = a tRNA with a 3' CCA end + 3 diphosphate. The enzyme catalyses a tRNA with a 3' CCA end + 2 CTP + ATP = a tRNA with a 3' CCACCA end + 3 diphosphate. In terms of biological role, catalyzes the addition and repair of the essential 3'-terminal CCA sequence in tRNAs without using a nucleic acid template. Adds these three nucleotides in the order of C, C, and A to the tRNA nucleotide-73, using CTP and ATP as substrates and producing inorganic pyrophosphate. tRNA 3'-terminal CCA addition is required both for tRNA processing and repair. Also involved in tRNA surveillance by mediating tandem CCA addition to generate a CCACCA at the 3' terminus of unstable tRNAs. While stable tRNAs receive only 3'-terminal CCA, unstable tRNAs are marked with CCACCA and rapidly degraded. In Neisseria gonorrhoeae (strain NCCP11945), this protein is Multifunctional CCA protein.